A 63-amino-acid polypeptide reads, in one-letter code: Cecropin-C (63 aa).

The signal sequence occupies residues 1–23 (MNFYKIFVFVALILAISIGQSEA). Arginine amide is present on Arg62.

Belongs to the cecropin family.

The protein resides in the secreted. Its function is as follows. Cecropins have lytic and antibacterial activity against several Gram-positive and Gram-negative bacteria. This Drosophila mauritiana (Fruit fly) protein is Cecropin-C (CecC).